A 394-amino-acid polypeptide reads, in one-letter code: Elongation factor Tu (394 aa).

Residues 10–204 (KPHINVGTIG…SLDKYIPIPV (195 aa)) form the tr-type G domain. A G1 region spans residues 19-26 (GHVDHGKT). Residue 19-26 (GHVDHGKT) coordinates GTP. T26 contributes to the Mg(2+) binding site. Positions 60-64 (GITIN) are G2. The interval 81 to 84 (DCPG) is G3. GTP-binding positions include 81-85 (DCPGH) and 136-139 (NKCD). The interval 136–139 (NKCD) is G4. Positions 174 to 176 (SAL) are G5.

It belongs to the TRAFAC class translation factor GTPase superfamily. Classic translation factor GTPase family. EF-Tu/EF-1A subfamily. Monomer.

It is found in the cytoplasm. It catalyses the reaction GTP + H2O = GDP + phosphate + H(+). Functionally, GTP hydrolase that promotes the GTP-dependent binding of aminoacyl-tRNA to the A-site of ribosomes during protein biosynthesis. This Buchnera aphidicola subsp. Cinara cedri (strain Cc) protein is Elongation factor Tu.